Here is a 108-residue protein sequence, read N- to C-terminus: Protein YcgL (108 aa).

A YcgL domain is found at 12 to 96 (MFCVIYRSSK…SPEDLLKQHL (85 aa)).

This is Protein YcgL from Shigella dysenteriae serotype 1 (strain Sd197).